The sequence spans 474 residues: MGVRIYNTATRQVEEFVTYVPKLARGYVCGITPYDHVHVGHGRVYVFFDMFRRYLEARGYEVRLVINFTDIDDKIINKAREEFGHDAYKRWKEVPERYIAEFFEMSNKLFIKPAHAYPRVTENVNEMVAWISTLVEKGYAYVAPDGSVYFEVGKVPNYGVLSRQKIEELIAGARVEPEPGKKNPLDFALWKSWTPGEPWWNSPWCPGRPGWHLECVVMSTKYLGAPFDFHGGGADLIFPHHENEIAIAKAYYGLDNFAKYWIHVGYLTVRGEKMSKSLGNVITLREVLSKYSGEALRLAYAMSHYRKPMEFSFELLDQAEEMVKTLYTAYDELSQAVADASDEDKEKLEYGKYIESFYAALEDDFSTPQAAQQLYGLARYIISTVLHRIDKASRQTAIDVLTQYVKMADILGVLERREIPKEVEEVIKAVVEARARLRREKMYQLADYLRERLAGIGVELHDFGQRTYYTYKRR.

Cys-29 serves as a coordination point for Zn(2+). Positions 31-41 (ITPYDHVHVGH) match the 'HIGH' region motif. Zn(2+) contacts are provided by Cys-215, His-240, and Glu-244. Residues 273–277 (KMSKS) carry the 'KMSKS' region motif. Lys-276 is an ATP binding site.

This sequence belongs to the class-I aminoacyl-tRNA synthetase family. It depends on Zn(2+) as a cofactor.

It is found in the cytoplasm. The catalysed reaction is tRNA(Cys) + L-cysteine + ATP = L-cysteinyl-tRNA(Cys) + AMP + diphosphate. In Pyrobaculum aerophilum (strain ATCC 51768 / DSM 7523 / JCM 9630 / CIP 104966 / NBRC 100827 / IM2), this protein is Cysteine--tRNA ligase.